We begin with the raw amino-acid sequence, 70 residues long: UPF0426 protein ssl0294 (70 aa).

This sequence belongs to the UPF0426 family.

This chain is UPF0426 protein ssl0294, found in Synechocystis sp. (strain ATCC 27184 / PCC 6803 / Kazusa).